Reading from the N-terminus, the 63-residue chain is Ferredoxin (63 aa).

One can recognise a 4Fe-4S ferredoxin-type domain in the interval 3–31 (WKVSVDVDTCIGDAICASLCPDVFEMGDD). Residues cysteine 12, aspartate 15, and cysteine 18 each contribute to the [4Fe-4S] cluster site. Cysteines 22 and 45 form a disulfide. Cysteine 53 lines the [4Fe-4S] cluster pocket.

It depends on [4Fe-4S] cluster as a cofactor. The cofactor is [3Fe-4S] cluster.

In terms of biological role, ferredoxins are iron-sulfur proteins that transfer electrons in a wide variety of metabolic reactions. The protein is Ferredoxin (fdxA) of Thermococcus kodakarensis (strain ATCC BAA-918 / JCM 12380 / KOD1) (Pyrococcus kodakaraensis (strain KOD1)).